A 238-amino-acid polypeptide reads, in one-letter code: Auxin-responsive protein IAA2 (238 aa).

An EAR-like (transcriptional repression) motif is present at residues 24 to 28 (LCLGL). 3 stretches are compositionally biased toward low complexity: residues 33-44 (SSSSSSKPSEGS), 59-69 (ASKPSGAAAAA), and 85-94 (ASSSSSSSKQ). Disordered regions lie at residues 33–69 (SSSS…AAAA) and 82–114 (RNLA…KDGG). Positions 118–216 (GMFVKINMDG…TAKRLRVLKS (99 aa)) constitute a PB1 domain. A disordered region spans residues 217-238 (SDLPPPSLMRAAGSRKRAAADS). The span at 229–238 (GSRKRAAADS) shows a compositional bias: basic residues.

This sequence belongs to the Aux/IAA family. As to quaternary structure, homodimers and heterodimers. In terms of tissue distribution, highly expressed in flowers.

It is found in the nucleus. Functionally, aux/IAA proteins are short-lived transcriptional factors that function as repressors of early auxin response genes at low auxin concentrations. This is Auxin-responsive protein IAA2 (IAA2) from Oryza sativa subsp. japonica (Rice).